The chain runs to 314 residues: Homoserine O-acetyltransferase (314 aa).

C142 (acyl-thioester intermediate) is an active-site residue. Residues K163 and S192 each contribute to the substrate site. H235 functions as the Proton acceptor in the catalytic mechanism. Residue E237 is part of the active site. Position 249 (R249) interacts with substrate.

Belongs to the MetA family.

It localises to the cytoplasm. The enzyme catalyses L-homoserine + acetyl-CoA = O-acetyl-L-homoserine + CoA. The protein operates within amino-acid biosynthesis; L-methionine biosynthesis via de novo pathway; O-acetyl-L-homoserine from L-homoserine: step 1/1. Functionally, transfers an acetyl group from acetyl-CoA to L-homoserine, forming acetyl-L-homoserine. This is Homoserine O-acetyltransferase from Streptococcus mutans serotype c (strain ATCC 700610 / UA159).